A 206-amino-acid chain; its full sequence is Small ribosomal subunit protein eS1 (206 aa).

The protein belongs to the eukaryotic ribosomal protein eS1 family.

This chain is Small ribosomal subunit protein eS1, found in Halobacterium salinarum (strain ATCC 29341 / DSM 671 / R1).